The following is a 225-amino-acid chain: ATP phosphoribosyltransferase (225 aa).

The protein belongs to the ATP phosphoribosyltransferase family. Short subfamily. As to quaternary structure, heteromultimer composed of HisG and HisZ subunits.

The protein resides in the cytoplasm. The enzyme catalyses 1-(5-phospho-beta-D-ribosyl)-ATP + diphosphate = 5-phospho-alpha-D-ribose 1-diphosphate + ATP. Its pathway is amino-acid biosynthesis; L-histidine biosynthesis; L-histidine from 5-phospho-alpha-D-ribose 1-diphosphate: step 1/9. Its function is as follows. Catalyzes the condensation of ATP and 5-phosphoribose 1-diphosphate to form N'-(5'-phosphoribosyl)-ATP (PR-ATP). Has a crucial role in the pathway because the rate of histidine biosynthesis seems to be controlled primarily by regulation of HisG enzymatic activity. This Herminiimonas arsenicoxydans protein is ATP phosphoribosyltransferase.